The chain runs to 263 residues: Protein MARD1 (263 aa).

An FLZ-type zinc finger spans residues 219-263 (SFLSRCFTCKKNLDQKQDIYIYRGEKGFCSSECRYQEMLLDQMET).

It belongs to the FLZ family. As to quaternary structure, interacts with KIN10 and KIN11 via its FLZ-type zinc finger domain. Interacts with KINB1 and KINB2 via its N-terminal part. Interacts with TZF4, TZF5 and TZF6. Interacts with MPK3 and MPK6.

It is found in the cytoplasm. Its subcellular location is the stress granule. It localises to the P-body. May act as an adapter to facilitate the interaction of SnRK1 complex with effector proteins, conferring tissue- and stimulus-type specific differences in the SnRK1 regulation pathway. Involved in seed dormancy control. The chain is Protein MARD1 from Arabidopsis thaliana (Mouse-ear cress).